Consider the following 975-residue polypeptide: Probable ATP-dependent RNA helicase CG8611 (975 aa).

Polar residues predominate over residues 1-24 (MVENISLNVTVKSSARKNQQQSPA). Disordered regions lie at residues 1–38 (MVENISLNVTVKSSARKNQQQSPALSVKKRAQKSQDFD), 50–104 (AIVV…DDLM), and 127–295 (TTKP…FRTK). Residues 64–94 (PTNSSVPNTTKSPTPSVSSSKSAISTLSASP) show a composition bias toward low complexity. Residues serine 75 and serine 99 each carry the phosphoserine modification. Positions 190 to 203 (QLEEERRQKRREEG) are enriched in basic and acidic residues. 3 positions are modified to phosphoserine: serine 210, serine 220, and serine 224. Residues 242–261 (IEDSGESGEESATSDEEPDE) are compositionally biased toward acidic residues. Basic and acidic residues predominate over residues 269–285 (QEKEPKQTAKKPPKAEE). The short motif at 327–356 (SKISTLGLHPHAVKNLEDLLSIRELTSVQQ) is the Q motif element. The region spanning 359–548 (IPEVLQGKDV…GLTLKNPLYI (190 aa)) is the Helicase ATP-binding domain. 372–379 (SQTGSGKT) is an ATP binding site. The DEAD box motif lies at 485 to 488 (DEAD). One can recognise a Helicase C-terminal domain in the interval 616–789 (LLAKEVDASP…DMYAYLQTLL (174 aa)). The residue at position 667 (serine 667) is a Phosphoserine. Disordered regions lie at residues 915–942 (LQQRDVGAQKPGAPPPKGGFIGGGVGRS) and 955–975 (NMSEFDSGLPPEGAAKRRKQA).

The protein belongs to the DEAD box helicase family. DDX31/DBP7 subfamily.

The catalysed reaction is ATP + H2O = ADP + phosphate + H(+). Its function is as follows. Probable ATP-dependent RNA helicase. The chain is Probable ATP-dependent RNA helicase CG8611 from Drosophila melanogaster (Fruit fly).